A 225-amino-acid polypeptide reads, in one-letter code: Phosphoserine phosphatase (225 aa).

N-acetylmethionine is present on Met-1. Catalysis depends on Asp-20, which acts as the Nucleophile. The Mg(2+) site is built by Asp-20 and Asp-22. 20–22 (DVD) provides a ligand contact to L-serine. Residue Asp-22 is the Proton donor of the active site. Met-52 is an O-phospho-L-serine binding site. Gly-53 lines the phosphate pocket. L-serine-binding positions include 109 to 111 (SGG) and Lys-158. O-phospho-L-serine contacts are provided by residues 109–111 (SGG) and Lys-158. Residue Asp-179 coordinates Mg(2+). Thr-182 lines the O-phospho-L-serine pocket. Thr-182 contributes to the phosphate binding site.

This sequence belongs to the HAD-like hydrolase superfamily. SerB family. As to quaternary structure, homodimer. It depends on Mg(2+) as a cofactor.

It localises to the cytoplasm. The protein localises to the cytosol. The enzyme catalyses O-phospho-L-serine + H2O = L-serine + phosphate. It catalyses the reaction O-phospho-D-serine + H2O = D-serine + phosphate. Its pathway is amino-acid biosynthesis; L-serine biosynthesis; L-serine from 3-phospho-D-glycerate: step 3/3. Catalyzes the last irreversible step in the biosynthesis of L-serine from carbohydrates, the dephosphorylation of O-phospho-L-serine to L-serine. L-serine can then be used in protein synthesis, to produce other amino acids, in nucleotide metabolism or in glutathione synthesis, or can be racemized to D-serine, a neuromodulator. May also act on O-phospho-D-serine. The sequence is that of Phosphoserine phosphatase from Bos taurus (Bovine).